Reading from the N-terminus, the 824-residue chain is Cell division cycle protein 27 homolog (824 aa).

4 TPR repeats span residues 6-35 (EPVQ…YAEV), 38-65 (EEAL…KGHS), 67-99 (TTPQ…VFNK), and 115-145 (CFTL…LSLN). 3 positions are modified to phosphothreonine: Thr-205, Thr-209, and Thr-244. A disordered region spans residues 287 to 422 (LETPSPGDGS…TNKGGITQPN (136 aa)). Ser-291 carries the post-translational modification Phosphoserine. At Thr-313 the chain carries Phosphothreonine. Residues 326 to 341 (QTGTKSVFSQSGNSRE) show a composition bias toward polar residues. Ser-339 bears the Phosphoserine mark. Residues 348–361 (QTQSSGPQTSTTPQ) show a composition bias toward low complexity. Over residues 362-371 (VLSPTITSPP) the composition is skewed to polar residues. The residue at position 366 (Thr-366) is a Phosphothreonine. 2 positions are modified to phosphoserine: Ser-379 and Ser-386. A compositionally biased stretch (polar residues) spans 380 to 390 (RLFTSDSSTTK). The segment covering 395 to 413 (KLKMKFPPKIPNRKTKSKT) has biased composition (basic residues). Residue Ser-426 is modified to Phosphoserine. Thr-430 carries the phosphothreonine modification. Phosphoserine is present on residues Ser-435 and Ser-438. Residue Thr-446 is modified to Phosphothreonine. TPR repeat units follow at residues 465–495 (LLRE…PSHH), 499–528 (GWVL…VRRI), 533–563 (VEGM…TDMD), 567–598 (PEAW…QVDP), 601–631 (AYAY…IRVN), 635–667 (YNAW…INPQ), 670–702 (VLLC…DPKN), 704–734 (LCKF…QIVP), and 737–768 (SLVY…DLDP). Positions 781-824 (KRYLPDDEEPITQEEQIMGTDESQESSMTDADDTQLHAAESDEF) are disordered. At Ser-821 the chain carries Phosphoserine.

It belongs to the APC3/CDC27 family. Homodimer. The mammalian APC/C is composed at least of 14 distinct subunits ANAPC1, ANAPC2, CDC27/APC3, ANAPC4, ANAPC5, CDC16/APC6, ANAPC7, CDC23/APC8, ANAPC10, ANAPC11, CDC26/APC12, ANAPC13, ANAPC15 and ANAPC16 that assemble into a complex of at least 19 chains with a combined molecular mass of around 1.2 MDa; APC/C interacts with FZR1 and FBXO5. Interacts with RB. Interacts with FAM168B/MANI. Interacts with MCPH1. In terms of processing, phosphorylated. Phosphorylation on Ser-426 and Thr-446 occurs specifically during mitosis.

Its subcellular location is the nucleus. It is found in the cytoplasm. The protein resides in the cytoskeleton. It localises to the spindle. The protein operates within protein modification; protein ubiquitination. Its function is as follows. Component of the anaphase promoting complex/cyclosome (APC/C), a cell cycle-regulated E3 ubiquitin ligase that controls progression through mitosis and the G1 phase of the cell cycle. The APC/C complex acts by mediating ubiquitination and subsequent degradation of target proteins: it mainly mediates the formation of 'Lys-11'-linked polyubiquitin chains and, to a lower extent, the formation of 'Lys-48'- and 'Lys-63'-linked polyubiquitin chains. The APC/C complex catalyzes assembly of branched 'Lys-11'-/'Lys-48'-linked branched ubiquitin chains on target proteins. This chain is Cell division cycle protein 27 homolog (CDC27), found in Homo sapiens (Human).